Here is a 212-residue protein sequence, read N- to C-terminus: Membrane-bound lytic murein transglycosylase E (212 aa).

It belongs to the transglycosylase Slt family.

It carries out the reaction Exolytic cleavage of the (1-&gt;4)-beta-glycosidic linkage between N-acetylmuramic acid (MurNAc) and N-acetylglucosamine (GlcNAc) residues in peptidoglycan, from either the reducing or the non-reducing ends of the peptidoglycan chains, with concomitant formation of a 1,6-anhydrobond in the MurNAc residue.. In terms of biological role, murein-degrading enzyme. May play a role in recycling of muropeptides during cell elongation and/or cell division. In Buchnera aphidicola subsp. Baizongia pistaciae (strain Bp), this protein is Membrane-bound lytic murein transglycosylase E (mltE).